The sequence spans 692 residues: Elongation factor G (692 aa).

A tr-type G domain is found at 8 to 282; sequence ENTRNIGIMA…AVIDYLPSPL (275 aa). GTP-binding positions include 17-24, 81-85, and 135-138; these read AHIDAGKT, DTPGH, and NKMD.

This sequence belongs to the TRAFAC class translation factor GTPase superfamily. Classic translation factor GTPase family. EF-G/EF-2 subfamily.

Its subcellular location is the cytoplasm. Catalyzes the GTP-dependent ribosomal translocation step during translation elongation. During this step, the ribosome changes from the pre-translocational (PRE) to the post-translocational (POST) state as the newly formed A-site-bound peptidyl-tRNA and P-site-bound deacylated tRNA move to the P and E sites, respectively. Catalyzes the coordinated movement of the two tRNA molecules, the mRNA and conformational changes in the ribosome. This chain is Elongation factor G, found in Bacillus cereus (strain ATCC 14579 / DSM 31 / CCUG 7414 / JCM 2152 / NBRC 15305 / NCIMB 9373 / NCTC 2599 / NRRL B-3711).